A 404-amino-acid chain; its full sequence is Cysteine desulfurase IscS (404 aa).

Pyridoxal 5'-phosphate-binding positions include 75-76 (AT), Asn-155, Gln-183, and 203-205 (SAH). Lys-206 is subject to N6-(pyridoxal phosphate)lysine. Pyridoxal 5'-phosphate is bound at residue Thr-243. Cys-328 serves as the catalytic Cysteine persulfide intermediate. [2Fe-2S] cluster is bound at residue Cys-328.

This sequence belongs to the class-V pyridoxal-phosphate-dependent aminotransferase family. NifS/IscS subfamily. In terms of assembly, homodimer. Forms a heterotetramer with IscU, interacts with other sulfur acceptors. Pyridoxal 5'-phosphate serves as cofactor.

It is found in the cytoplasm. It carries out the reaction (sulfur carrier)-H + L-cysteine = (sulfur carrier)-SH + L-alanine. It functions in the pathway cofactor biosynthesis; iron-sulfur cluster biosynthesis. In terms of biological role, master enzyme that delivers sulfur to a number of partners involved in Fe-S cluster assembly, tRNA modification or cofactor biosynthesis. Catalyzes the removal of elemental sulfur atoms from cysteine to produce alanine. Functions as a sulfur delivery protein for Fe-S cluster synthesis onto IscU, an Fe-S scaffold assembly protein, as well as other S acceptor proteins. This is Cysteine desulfurase IscS from Pseudomonas putida (strain GB-1).